A 316-amino-acid chain; its full sequence is Phospholipase A1 4 (316 aa).

The first 4 residues, 1–4 (ADDL), serve as a signal peptide directing secretion. Residues 5–14 (TTLRNGTLDR) constitute a propeptide that is removed on maturation. The cysteines at positions 20 and 103 are disulfide-linked. Ser153 (nucleophile) is an active-site residue. Asp181 (charge relay system) is an active-site residue. Intrachain disulfides connect Cys192-Cys197 and Cys235-Cys240. His242 serves as the catalytic Charge relay system. Intrachain disulfides connect Cys257/Cys284, Cys258/Cys309, and Cys277/Cys282.

Belongs to the AB hydrolase superfamily. Lipase family. As to expression, expressed by the venom gland.

Its subcellular location is the secreted. It carries out the reaction a 1,2-diacyl-sn-glycero-3-phosphocholine + H2O = a 2-acyl-sn-glycero-3-phosphocholine + a fatty acid + H(+). Catalyzes the hydrolysis of phosphatidylcholine with phospholipase A1 activity. May act as an allergen and induce hemolytic activity. This chain is Phospholipase A1 4, found in Polistes dominula (European paper wasp).